A 216-amino-acid chain; its full sequence is Large ribosomal subunit protein eL15 (216 aa).

Belongs to the eukaryotic ribosomal protein eL15 family.

The sequence is that of Large ribosomal subunit protein eL15 from Metallosphaera sedula (strain ATCC 51363 / DSM 5348 / JCM 9185 / NBRC 15509 / TH2).